Reading from the N-terminus, the 349-residue chain is C-X-C chemokine receptor type 4 (349 aa).

An important for chemokine binding and signaling region spans residues 1 to 18 (MEIYTSDNYSEEVGSGDY). A disordered region spans residues 1–23 (MEIYTSDNYSEEVGSGDYDSNKE). At 1 to 35 (MEIYTSDNYSEEVGSGDYDSNKEPCFRDENENFNR) the chain is on the extracellular side. Residue asparagine 8 is glycosylated (N-linked (GlcNAc...) asparagine). At tyrosine 9 the chain carries Sulfotyrosine. A glycan (O-linked (Xyl...) (chondroitin sulfate) serine) is linked at serine 15. Position 18 is a sulfotyrosine (tyrosine 18). 2 cysteine pairs are disulfide-bonded: cysteine 25–cysteine 271 and cysteine 106–cysteine 183. The helical transmembrane segment at 36–60 (IFLPTIYFIIFLTGIVGNGLVILVM) threads the bilayer. The Cytoplasmic portion of the chain corresponds to 61 to 74 (GYQKKLRSMTDKYR). The chain crosses the membrane as a helical span at residues 75-96 (LHLSVADLLFVITLPFWAVDAM). The interval 91–94 (WAVD) is chemokine binding. The Extracellular portion of the chain corresponds to 97 to 107 (ADWYFGKFLCK). A helical transmembrane segment spans residues 108–127 (AVHIIYTVNLYSSVLILAFI). Residues 110 to 114 (HIIYT) are chemokine binding. At 128–151 (SLDRYLAIVHATNSQRPRKLLAEK) the chain is on the cytoplasmic side. The Important for signaling motif lies at 130 to 132 (DRY). Positions 132-144 (YLAIVHATNSQRP) are involved in dimerization; when bound to chemokine. A helical membrane pass occupies residues 152–171 (AVYVGVWIPALLLTIPDIIF). At 172–192 (ADVSQGDGRYICDRLYPDSLW) the chain is on the extracellular side. Residues 183–187 (CDRLY) are chemokine binding, important for signaling. The tract at residues 188–207 (PDSLWMVVFQFQHIMVGLIL) is involved in dimerization. The helical transmembrane segment at 193-213 (MVVFQFQHIMVGLILPGIVIL) threads the bilayer. At 214–238 (SCYCIIISKLSHSKGHQKRKALKTT) the chain is on the cytoplasmic side. Residues 239–258 (VILILAFFACWLPYYVGISI) traverse the membrane as a helical segment. Topologically, residues 259–279 (DSFILLEVIKQGCEFESVVHK) are extracellular. An involved in dimerization region spans residues 263 to 265 (LLE). A helical transmembrane segment spans residues 280–299 (WISITEALAFFHCCLNPILY). Residues 300-349 (AFLGAKFKSSAQHALNSMSRGSSLKILSKGKRGGHSSVSTESESSSFHSS) are Cytoplasmic-facing. A phosphoserine mark is found at serine 316 and serine 318. Residues serine 321 and serine 322 each carry the phosphoserine; by PKC and GRK6 modification. Residues 325-349 (ILSKGKRGGHSSVSTESESSSFHSS) form a disordered region. The residue at position 327 (serine 327) is a Phosphoserine; by GRK6. Lysine 328 is covalently cross-linked (Glycyl lysine isopeptide (Lys-Gly) (interchain with G-Cter in ubiquitin)). Over residues 334–349 (HSSVSTESESSSFHSS) the composition is skewed to low complexity. At serine 336 the chain carries Phosphoserine; by GRK6. 2 positions are modified to phosphoserine: serine 345 and serine 348.

It belongs to the G-protein coupled receptor 1 family. Monomer. Can form homodimers. Interacts with CD164. Interacts with ARRB2; the interaction is dependent on the C-terminal phosphorylation of CXCR4 and allows activation of MAPK1 and MAPK3. Interacts with ARR3; the interaction is dependent on the C-terminal phosphorylation of CXCR4 and modulates calcium mobilization. Interacts with RNF113A; the interaction, enhanced by CXCL12, promotes CXCR4 ubiquitination and subsequent degradation. Interacts (via the cytoplasmic C-terminal) with ITCH (via the WW domains I and II); the interaction, enhanced by CXCL12, promotes CXCR4 ubiquitination and leads to its degradation. Interacts with extracellular ubiquitin. Interacts with DBN1; this interaction is enhanced by antigenic stimulation. Following LPS binding, may form a complex with GDF5, HSP90AA1 and HSPA8. Post-translationally, phosphorylated on agonist stimulation. Rapidly phosphorylated on serine and threonine residues in the C-terminal. Phosphorylation at Ser-321 and Ser-322 leads to recruitment of ITCH, ubiquitination and protein degradation. Ubiquitinated after ligand binding, leading to its degradation. Ubiquitinated by ITCH at the cell membrane on agonist stimulation. The ubiquitin-dependent mechanism, endosomal sorting complex required for transport (ESCRT), then targets CXCR4 for lysosomal degradation. This process is dependent also on prior Ser-/Thr-phosphorylation in the C-terminal of CXCR4. Also binding of ARRB1 to STAM negatively regulates CXCR4 sorting to lysosomes though modulating ubiquitination of SFR5S. In terms of processing, sulfation is required for efficient binding of CXCL12/SDF-1alpha and promotes its dimerization. Post-translationally, O- and N-glycosylated. N-glycosylation can mask coreceptor function. The O-glycosylation chondroitin sulfate attachment does not affect interaction with CXCL12/SDF-1alpha nor its coreceptor activity.

The protein localises to the cell membrane. It localises to the cell junction. It is found in the early endosome. The protein resides in the late endosome. Its subcellular location is the lysosome. Its function is as follows. Receptor for the C-X-C chemokine CXCL12/SDF-1 that transduces a signal by increasing intracellular calcium ion levels and enhancing MAPK1/MAPK3 activation. Involved in the AKT signaling cascade. Plays a role in regulation of cell migration, e.g. during wound healing. Acts as a receptor for extracellular ubiquitin; leading to enhanced intracellular calcium ions and reduced cellular cAMP levels. Binds bacterial lipopolysaccharide (LPS) et mediates LPS-induced inflammatory response, including TNF secretion by monocytes. Involved in hematopoiesis and in cardiac ventricular septum formation. Also plays an essential role in vascularization of the gastrointestinal tract, probably by regulating vascular branching and/or remodeling processes in endothelial cells. Involved in cerebellar development. In the CNS, could mediate hippocampal-neuron survival. This chain is C-X-C chemokine receptor type 4 (Cxcr4), found in Rattus norvegicus (Rat).